Here is a 934-residue protein sequence, read N- to C-terminus: Bifunctional uridylyltransferase/uridylyl-removing enzyme (934 aa).

Positions 1–379 (MSAHDLKLEE…TFSRRKRKLS (379 aa)) are uridylyltransferase. The tract at residues 380 to 736 (DDGAFISENH…AKPHAFEAVT (357 aa)) is uridylyl-removing. The region spanning 496-613 (VDEHLLRCIA…IDFADTVQTM (118 aa)) is the HD domain. ACT domains are found at residues 737–818 (EITV…DMLA) and 848–931 (VIEV…RSPQ).

It belongs to the GlnD family. Requires Mg(2+) as cofactor.

The enzyme catalyses [protein-PII]-L-tyrosine + UTP = [protein-PII]-uridylyl-L-tyrosine + diphosphate. The catalysed reaction is [protein-PII]-uridylyl-L-tyrosine + H2O = [protein-PII]-L-tyrosine + UMP + H(+). Uridylyltransferase (UTase) activity is inhibited by glutamine, while glutamine activates uridylyl-removing (UR) activity. Modifies, by uridylylation and deuridylylation, the PII regulatory proteins (GlnB and homologs), in response to the nitrogen status of the cell that GlnD senses through the glutamine level. Under low glutamine levels, catalyzes the conversion of the PII proteins and UTP to PII-UMP and PPi, while under higher glutamine levels, GlnD hydrolyzes PII-UMP to PII and UMP (deuridylylation). Thus, controls uridylylation state and activity of the PII proteins, and plays an important role in the regulation of nitrogen assimilation and metabolism. This Brucella ovis (strain ATCC 25840 / 63/290 / NCTC 10512) protein is Bifunctional uridylyltransferase/uridylyl-removing enzyme.